We begin with the raw amino-acid sequence, 97 residues long: Serine protease inhibitor Kazal-type 8 (97 aa).

The N-terminal stretch at 1–21 (MKGICSDAILVLATSMWMAFA) is a signal peptide. Residues 36-96 (DKTIVECLKN…TKLYDGQCEN (61 aa)) form the Kazal-like domain. Disulfide bonds link Cys42–Cys76, Cys49–Cys73, and Cys62–Cys94. A glycan (N-linked (GlcNAc...) asparagine) is linked at Asn85.

It localises to the secreted. Its function is as follows. Probable serine protease inhibitor. This Homo sapiens (Human) protein is Serine protease inhibitor Kazal-type 8 (SPINK8).